A 429-amino-acid polypeptide reads, in one-letter code: Multifunctional CCA protein (429 aa).

ATP-binding residues include Gly-27 and Arg-30. CTP-binding residues include Gly-27 and Arg-30. 2 residues coordinate Mg(2+): Asp-40 and Asp-42. Positions 110, 162, and 165 each coordinate ATP. Residues Arg-110, Arg-162, and Arg-165 each contribute to the CTP site. Positions 251 to 352 (TGVHTMMVVD…VRLLERCDAL (102 aa)) constitute an HD domain.

This sequence belongs to the tRNA nucleotidyltransferase/poly(A) polymerase family. Bacterial CCA-adding enzyme type 1 subfamily. In terms of assembly, monomer. Can also form homodimers and oligomers. It depends on Mg(2+) as a cofactor. Requires Ni(2+) as cofactor.

It catalyses the reaction a tRNA precursor + 2 CTP + ATP = a tRNA with a 3' CCA end + 3 diphosphate. The enzyme catalyses a tRNA with a 3' CCA end + 2 CTP + ATP = a tRNA with a 3' CCACCA end + 3 diphosphate. Catalyzes the addition and repair of the essential 3'-terminal CCA sequence in tRNAs without using a nucleic acid template. Adds these three nucleotides in the order of C, C, and A to the tRNA nucleotide-73, using CTP and ATP as substrates and producing inorganic pyrophosphate. tRNA 3'-terminal CCA addition is required both for tRNA processing and repair. Also involved in tRNA surveillance by mediating tandem CCA addition to generate a CCACCA at the 3' terminus of unstable tRNAs. While stable tRNAs receive only 3'-terminal CCA, unstable tRNAs are marked with CCACCA and rapidly degraded. The sequence is that of Multifunctional CCA protein from Ralstonia nicotianae (strain ATCC BAA-1114 / GMI1000) (Ralstonia solanacearum).